The primary structure comprises 571 residues: Acetolactate synthase large subunit (571 aa).

E51 serves as a coordination point for thiamine diphosphate. Residues R153, H261–R282, and D304–D323 each bind FAD. Positions Q394 to S474 are thiamine pyrophosphate binding. Residues D445 and N472 each contribute to the Mg(2+) site.

The protein belongs to the TPP enzyme family. As to quaternary structure, dimer of large and small chains. The cofactor is Mg(2+). It depends on thiamine diphosphate as a cofactor.

The enzyme catalyses 2 pyruvate + H(+) = (2S)-2-acetolactate + CO2. Its pathway is amino-acid biosynthesis; L-isoleucine biosynthesis; L-isoleucine from 2-oxobutanoate: step 1/4. It functions in the pathway amino-acid biosynthesis; L-valine biosynthesis; L-valine from pyruvate: step 1/4. This chain is Acetolactate synthase large subunit (ilvI), found in Buchnera aphidicola subsp. Schizaphis graminum (strain Sg).